We begin with the raw amino-acid sequence, 326 residues long: N-acetyl-gamma-glutamyl-phosphate reductase (326 aa).

Cysteine 155 is a catalytic residue.

The protein belongs to the NAGSA dehydrogenase family. Type 1 subfamily.

The protein resides in the cytoplasm. It catalyses the reaction N-acetyl-L-glutamate 5-semialdehyde + phosphate + NADP(+) = N-acetyl-L-glutamyl 5-phosphate + NADPH + H(+). Its pathway is amino-acid biosynthesis; L-arginine biosynthesis; N(2)-acetyl-L-ornithine from L-glutamate: step 3/4. Catalyzes the NADPH-dependent reduction of N-acetyl-5-glutamyl phosphate to yield N-acetyl-L-glutamate 5-semialdehyde. The polypeptide is N-acetyl-gamma-glutamyl-phosphate reductase (Shewanella sediminis (strain HAW-EB3)).